Here is a 231-residue protein sequence, read N- to C-terminus: DNA damage response protein C (231 aa).

As to quaternary structure, homodimer.

It localises to the cytoplasm. Its subcellular location is the nucleoid. Appears to contribute to D.radiodurans capacity to survive exposure to ionizing radiation. Likely functions as a DNA damage-induced nucleoid-associated protein (NAP) that contributes to the enhanced level of nucleoid compaction after irradiation by bridging DNA duplexes, thereby limiting the dispersion of the fragmented genome immediately after irradiation to facilitate subsequent DNA repair. In vitro, binds both ssDNA and dsDNA, and is able to compact circular DNA, circularize linear DNA, anneal complementary DNA strands and protect DNA from nucleases. The polypeptide is DNA damage response protein C (Deinococcus radiodurans (strain ATCC 13939 / DSM 20539 / JCM 16871 / CCUG 27074 / LMG 4051 / NBRC 15346 / NCIMB 9279 / VKM B-1422 / R1)).